A 137-amino-acid polypeptide reads, in one-letter code: Large-conductance mechanosensitive channel (137 aa).

Topologically, residues 1 to 16 (MSIIKEFREFAMRGNV) are cytoplasmic. Residues 17 to 45 (VDLAVGVIIGALFGKIVSSLVSDIIMPPL) form a helical membrane-spanning segment. At 46–74 (GLLIGGVDFKQFALFLRNAQGGIPAVVMN) the chain is on the periplasmic side. The helical transmembrane segment at 75–94 (YGAFIQNIFDFIIVAFAIFI) threads the bilayer. The Cytoplasmic portion of the chain corresponds to 95-137 (AIKLMNKMRCKQEDTPAAPPKPSAEEKLLAEIRDLLKEQQTRQ).

Belongs to the MscL family. In terms of assembly, homopentamer.

The protein localises to the cell inner membrane. Functionally, channel that opens in response to stretch forces in the membrane lipid bilayer. Forms a nonselective ion channel with a conductance of about 4 nanosiemens. May participate in the regulation of osmotic pressure changes within the cell. The polypeptide is Large-conductance mechanosensitive channel (Pectobacterium carotovorum (Erwinia carotovora)).